Reading from the N-terminus, the 118-residue chain is NADPH-dependent 7-cyano-7-deazaguanine reductase (118 aa).

Cys-31 acts as the Thioimide intermediate in catalysis. Asp-38 functions as the Proton donor in the catalytic mechanism. Substrate-binding positions include 53–55 (VEL) and 72–73 (YE).

This sequence belongs to the GTP cyclohydrolase I family. QueF type 1 subfamily.

It is found in the cytoplasm. It catalyses the reaction 7-aminomethyl-7-carbaguanine + 2 NADP(+) = 7-cyano-7-deazaguanine + 2 NADPH + 3 H(+). Its pathway is tRNA modification; tRNA-queuosine biosynthesis. Functionally, catalyzes the NADPH-dependent reduction of 7-cyano-7-deazaguanine (preQ0) to 7-aminomethyl-7-deazaguanine (preQ1). This Chlorobium phaeobacteroides (strain BS1) protein is NADPH-dependent 7-cyano-7-deazaguanine reductase.